A 261-amino-acid chain; its full sequence is Putative [LysW]-aminoadipate/[LysW]-glutamate kinase (261 aa).

Substrate-binding positions include 35 to 36 (GG), Arg62, and Asn162.

It belongs to the acetylglutamate kinase family. LysZ subfamily.

The protein resides in the cytoplasm. It catalyses the reaction [amino-group carrier protein]-C-terminal-N-(1,4-dicarboxybutan-1-yl)-L-glutamine + ATP = [amino-group carrier protein]-C-terminal-N-(1-carboxy-5-phosphooxy-5-oxopentan-1-yl)-L-glutamine + ADP. The catalysed reaction is [amino-group carrier protein]-C-terminal-gamma-(L-glutamyl)-L-glutamate + ATP = [amino-group carrier protein]-C-terminal-gamma-(5-phospho-L-glutamyl)-L-glutamate + ADP. Its pathway is amino-acid biosynthesis; L-lysine biosynthesis via AAA pathway; L-lysine from L-alpha-aminoadipate (Thermus route): step 2/5. It functions in the pathway amino-acid biosynthesis; L-arginine biosynthesis. Its function is as follows. Involved in both the arginine and lysine biosynthetic pathways. Phosphorylates the LysW-bound precursors glutamate (for arginine biosynthesis), respectively alpha-aminoadipate (for lysine biosynthesis). In Pyrobaculum calidifontis (strain DSM 21063 / JCM 11548 / VA1), this protein is Putative [LysW]-aminoadipate/[LysW]-glutamate kinase.